A 227-amino-acid polypeptide reads, in one-letter code: PKHD-type hydroxylase Reut_B4660 (227 aa).

The 101-residue stretch at 78 to 178 folds into the Fe2OG dioxygenase domain; sequence KVFPPLFNRY…RVSSFFWIQS (101 aa). His-96, Asp-98, and His-159 together coordinate Fe cation. Arg-169 contributes to the 2-oxoglutarate binding site.

The cofactor is Fe(2+). L-ascorbate serves as cofactor.

This Cupriavidus pinatubonensis (strain JMP 134 / LMG 1197) (Cupriavidus necator (strain JMP 134)) protein is PKHD-type hydroxylase Reut_B4660.